Consider the following 687-residue polypeptide: Putative metabolite transport protein YDL199C (687 aa).

The segment at 1–22 is disordered; it reads MKPPLNMSRSNKPLTQEANSSA. Topologically, residues 1–122 are extracellular; sequence MKPPLNMSRS…RHSSRVLRTS (122 aa). Over residues 7 to 22 the composition is skewed to polar residues; sequence MSRSNKPLTQEANSSA. S90 carries the phosphoserine modification. Residues 123 to 143 traverse the membrane as a helical segment; it reads FISFVVLVSSLSGLDQGLISG. The Cytoplasmic portion of the chain corresponds to 144-164; sequence NVMTLSFQKYFHYPLTSPLGN. Residues 165–185 form a helical membrane-spanning segment; the sequence is IVSIVNLGAFMASLFVYSGIL. Topologically, residues 186–192 are extracellular; sequence EPCSRKK. The chain crosses the membrane as a helical span at residues 193-213; it reads MLQISTMIYSLGAIVQVLALN. Residues 214 to 216 are Cytoplasmic-facing; that stretch reads QWC. The chain crosses the membrane as a helical span at residues 217–237; that stretch reads LLLGRFLLGVGMGFAFSMVII. Residues 238-251 lie on the Extracellular side of the membrane; the sequence is YQFEFPLPCIRKRT. A helical membrane pass occupies residues 252–272; the sequence is LISIQCVSSVIAYSFGIWINC. At 273–283 the chain is on the cytoplasmic side; that stretch reads AFRYLGFAWRY. The helical transmembrane segment at 284–304 threads the bilayer; it reads PLSTHVALGIILNLMSFYLIL. Residues 305 to 410 lie on the Extracellular side of the membrane; sequence ESPSWLLKQK…MGRGERKSIY (106 aa). Residues 411 to 431 traverse the membrane as a helical segment; the sequence is LTGLNALIYSIVILAYVPLVL. Over 432-439 the chain is Cytoplasmic; that stretch reads RKRKEKTN. The chain crosses the membrane as a helical span at residues 440–460; sequence VLLGSIVMCALLFTISFTDWF. The Extracellular portion of the chain corresponds to 461–469; that stretch reads PKSTTRYIS. The chain crosses the membrane as a helical span at residues 470-490; it reads ILFAVFLFTHFISWDSIGWVM. Residues 491–500 are Cytoplasmic-facing; that stretch reads TIELLPHLSQ. A helical membrane pass occupies residues 501–521; that stretch reads APVILLVSNFYWIFKWFVSLI. Residues 522–533 lie on the Extracellular side of the membrane; that stretch reads TPILIDRLSWKF. Residues 534–554 traverse the membrane as a helical segment; it reads YLIPSLSSFISIIFVLKIFPI. The Cytoplasmic portion of the chain corresponds to 555–687; sequence ETRDERLDSD…QNSPGDMAVA (133 aa). Disordered stretches follow at residues 561-587 and 654-687; these read LDSD…SEFS and SFHN…MAVA. Polar residues predominate over residues 660–673; sequence DPNISDNIAANKPS.

The protein belongs to the major facilitator superfamily. Sugar transporter (TC 2.A.1.1) family.

The protein resides in the membrane. This chain is Putative metabolite transport protein YDL199C, found in Saccharomyces cerevisiae (strain ATCC 204508 / S288c) (Baker's yeast).